Reading from the N-terminus, the 517-residue chain is MIEVLIGLGAGVVGVGAGYLYAKKINDANYNIFLEQAKAKAKAIEYEAELTLKNSKISVQEAEFEAKKRYDDKTTKLQKEYASKFDELTKKEKILLNEQELLNESKELFEKDKQDAKVTYEEGLNLKATYQNKVEEAIRVLEHAAGLTEEEAKEVVLKKVEEKSRADIAHIVRKYEEEAKREAKKRVNYILAQATSRFAGEFAAERLINVVNIKNDELKGRIIGKEGRNIKTLEMVLGVDIIIDDTPHAIILSSFNLYRRAIATRVIELLVEDGRIQPARIEDLHKKVTEEFEQSIQEEGENIVMDLGLNKIHPEIVKLIGKLKFRASYGQNALAHSLEVAHLAGIIAAECGGDEKLAKRAGILHDIGKALTHEYEGSHVDLGAEICKRYKEHPVVINAIYAHHGHEEATSIESAAVCAADALSAARPGARREVLESFLKRVEEIENIAKSKEGIKQAYAINAGREIRVIANAKLINDDEAVLVAKEIAQEIESKVQYPGEIKVSVIRETRAVDFAK.

A helical transmembrane segment spans residues methionine 1–tyrosine 21. Residues leucine 207–aspartate 273 enclose the KH domain. Positions alanine 333–alanine 426 constitute an HD domain.

The protein belongs to the RNase Y family.

It is found in the cell membrane. Endoribonuclease that initiates mRNA decay. In Campylobacter concisus (strain 13826), this protein is Ribonuclease Y.